We begin with the raw amino-acid sequence, 457 residues long: Siroheme synthase 2 (457 aa).

The precorrin-2 dehydrogenase /sirohydrochlorin ferrochelatase stretch occupies residues 1–204 (MDHLPIFCQL…DDEQAVTRIT (204 aa)). Residues 22–23 (DV) and 43–44 (LA) each bind NAD(+). S128 carries the phosphoserine modification. The segment at 216 to 457 (GEVVLVGAGP…RDKLNWFSSK (242 aa)) is uroporphyrinogen-III C-methyltransferase. Residue P225 participates in S-adenosyl-L-methionine binding. D248 (proton acceptor) is an active-site residue. Catalysis depends on K270, which acts as the Proton donor. Residues 301-303 (GGD), I306, 331-332 (TA), M382, and G411 contribute to the S-adenosyl-L-methionine site.

The protein in the N-terminal section; belongs to the precorrin-2 dehydrogenase / sirohydrochlorin ferrochelatase family. In the C-terminal section; belongs to the precorrin methyltransferase family.

The catalysed reaction is uroporphyrinogen III + 2 S-adenosyl-L-methionine = precorrin-2 + 2 S-adenosyl-L-homocysteine + H(+). It catalyses the reaction precorrin-2 + NAD(+) = sirohydrochlorin + NADH + 2 H(+). The enzyme catalyses siroheme + 2 H(+) = sirohydrochlorin + Fe(2+). It participates in cofactor biosynthesis; adenosylcobalamin biosynthesis; precorrin-2 from uroporphyrinogen III: step 1/1. Its pathway is cofactor biosynthesis; adenosylcobalamin biosynthesis; sirohydrochlorin from precorrin-2: step 1/1. The protein operates within porphyrin-containing compound metabolism; siroheme biosynthesis; precorrin-2 from uroporphyrinogen III: step 1/1. It functions in the pathway porphyrin-containing compound metabolism; siroheme biosynthesis; siroheme from sirohydrochlorin: step 1/1. It participates in porphyrin-containing compound metabolism; siroheme biosynthesis; sirohydrochlorin from precorrin-2: step 1/1. In terms of biological role, multifunctional enzyme that catalyzes the SAM-dependent methylations of uroporphyrinogen III at position C-2 and C-7 to form precorrin-2 via precorrin-1. Then it catalyzes the NAD-dependent ring dehydrogenation of precorrin-2 to yield sirohydrochlorin. Finally, it catalyzes the ferrochelation of sirohydrochlorin to yield siroheme. This is Siroheme synthase 2 from Cronobacter sakazakii (strain ATCC BAA-894) (Enterobacter sakazakii).